Consider the following 514-residue polypeptide: Voltage-gated potassium channel regulatory subunit KCNG1 (514 aa).

Residues 1-224 (MTLLPGDNSD…DMVEKPHSGL (224 aa)) lie on the Cytoplasmic side of the membrane. Residues 181–196 (EREDEEEALDSEDQES) show a composition bias toward acidic residues. A disordered region spans residues 181–205 (EREDEEEALDSEDQESEGPSTSEGR). The helical transmembrane segment at 225–246 (PGKVFACLSVLFVTVTAVNLSV) threads the bilayer. Residues 247–267 (STLPSLREEEEQGQCSQMCHN) are Extracellular-facing. A helical transmembrane segment spans residues 268–289 (VFIVESVCVGWFSLEFLLRFIQ). The Cytoplasmic portion of the chain corresponds to 290-300 (APSKFAFLRSP). Residues 301–321 (LTLIDLVAILPYYVTLLVDGA) traverse the membrane as a helical segment. Residues 322–338 (ASSRRKPSTGNSYLDKV) are Extracellular-facing. A helical; Voltage-sensor membrane pass occupies residues 339–359 (GLVLRVLRALRILYVMRLARH). Over 360–374 (SLGLQTLGLTARRCT) the chain is Cytoplasmic. Residues 375 to 396 (REFGLLLLFLCVAIALFAPLLY) traverse the membrane as a helical segment. The Extracellular portion of the chain corresponds to 397–411 (VIENEMADSPEFTSI). The helical intramembrane region spans 412–423 (PACYWWAVITMT). The short motif at 424–429 (TVGYGD) is the Selectivity filter element. An intramembrane segment occupies 424 to 431 (TVGYGDMV). Residues 432–438 (PRSTPGQ) lie on the Extracellular side of the membrane. The helical transmembrane segment at 439–467 (VVALSSILSGILLMAFPVTSIFHTFSRSY) threads the bilayer. Topologically, residues 468–514 (LELKQEQERVLIRRAQYLIKTKSQLSGMSQDSDILFGSASSDTRDNN) are cytoplasmic.

This sequence belongs to the potassium channel family. G (TC 1.A.1.2) subfamily. Kv6.1/KCNG1 sub-subfamily. In terms of assembly, heterotetramer with KCNB1 or KCNB2.

The protein resides in the cell membrane. Functionally, regulatory alpha-subunit of the voltage-gated potassium (Kv) channel which, when coassembled with KCNB1 or KCNB2, can modulate their expression and their gating kinetics by acting on deactivation upon repolarization and inactivation during maintained depolarization. Potassium channel subunit that does not form functional channels by itself. This chain is Voltage-gated potassium channel regulatory subunit KCNG1, found in Rattus norvegicus (Rat).